Reading from the N-terminus, the 278-residue chain is Dermonecrotic toxin LhSicTox-alphaIV1iii (278 aa).

H5 is an active-site residue. Residues E25 and D27 each coordinate Mg(2+). H41 serves as the catalytic Nucleophile. 2 cysteine pairs are disulfide-bonded: C45–C51 and C47–C192. D85 contributes to the Mg(2+) binding site.

This sequence belongs to the arthropod phospholipase D family. Class II subfamily. It depends on Mg(2+) as a cofactor. In terms of tissue distribution, expressed by the venom gland.

It is found in the secreted. It carries out the reaction an N-(acyl)-sphingosylphosphocholine = an N-(acyl)-sphingosyl-1,3-cyclic phosphate + choline. The enzyme catalyses an N-(acyl)-sphingosylphosphoethanolamine = an N-(acyl)-sphingosyl-1,3-cyclic phosphate + ethanolamine. The catalysed reaction is a 1-acyl-sn-glycero-3-phosphocholine = a 1-acyl-sn-glycero-2,3-cyclic phosphate + choline. It catalyses the reaction a 1-acyl-sn-glycero-3-phosphoethanolamine = a 1-acyl-sn-glycero-2,3-cyclic phosphate + ethanolamine. Its function is as follows. Dermonecrotic toxins cleave the phosphodiester linkage between the phosphate and headgroup of certain phospholipids (sphingolipid and lysolipid substrates), forming an alcohol (often choline) and a cyclic phosphate. This toxin acts on sphingomyelin (SM). It may also act on ceramide phosphoethanolamine (CPE), lysophosphatidylcholine (LPC) and lysophosphatidylethanolamine (LPE), but not on lysophosphatidylserine (LPS), and lysophosphatidylglycerol (LPG). It acts by transphosphatidylation, releasing exclusively cyclic phosphate products as second products. Induces dermonecrosis, hemolysis, increased vascular permeability, edema, inflammatory response, and platelet aggregation. This is Dermonecrotic toxin LhSicTox-alphaIV1iii from Loxosceles hirsuta (Recluse spider).